We begin with the raw amino-acid sequence, 666 residues long: uncharacterized protein (666 aa).

In terms of domain architecture, RNB spans 263 to 553 (RFDLTTLKTY…THFQMKAYLR (291 aa)).

Belongs to the RNR ribonuclease family.

This is an uncharacterized protein from Synechocystis sp. (strain ATCC 27184 / PCC 6803 / Kazusa).